A 138-amino-acid polypeptide reads, in one-letter code: Cysteine desulfuration protein SufE (138 aa).

C51 serves as the catalytic Cysteine persulfide intermediate.

The protein belongs to the SufE family. Homodimer. Interacts with SufS.

Its subcellular location is the cytoplasm. It functions in the pathway cofactor biosynthesis; iron-sulfur cluster biosynthesis. In terms of biological role, participates in cysteine desulfuration mediated by SufS. Cysteine desulfuration mobilizes sulfur from L-cysteine to yield L-alanine and constitutes an essential step in sulfur metabolism for biosynthesis of a variety of sulfur-containing biomolecules. Functions as a sulfur acceptor for SufS, by mediating the direct transfer of the sulfur atom from the S-sulfanylcysteine of SufS, an intermediate product of cysteine desulfuration process. This chain is Cysteine desulfuration protein SufE, found in Pectobacterium atrosepticum (strain SCRI 1043 / ATCC BAA-672) (Erwinia carotovora subsp. atroseptica).